A 100-amino-acid chain; its full sequence is Large ribosomal subunit protein bL21 (100 aa).

This sequence belongs to the bacterial ribosomal protein bL21 family. In terms of assembly, part of the 50S ribosomal subunit. Contacts protein L20.

Functionally, this protein binds to 23S rRNA in the presence of protein L20. This is Large ribosomal subunit protein bL21 from Wolbachia sp. subsp. Drosophila simulans (strain wRi).